The following is an 814-amino-acid chain: Flagellar radial spoke protein 1 (814 aa).

Asymmetric dimethylarginine is present on Arg243. Residues 283-346 (VQSISTGNRE…PPPPAPKVDP (64 aa)) form a disordered region. Residues 303–329 (PEEDEEEEKEEEKEEPEEGEEGEEGEG) are compositionally biased toward acidic residues. At Arg428 the chain carries Asymmetric dimethylarginine. 6 MORN repeats span residues 577–597 (YFGS…FATG), 600–622 (YAGE…DGGT), 623–645 (YVGE…DGSV), 646–662 (YTGS…GVYW), 671–685 (GEWK…GTYE), and 691–707 (FEGE…ATYT). The interval 739–769 (GIPPGSGDEPQLDEEGQPIEDTDKPPLPAHP) is disordered. Residues 748 to 758 (PQLDEEGQPIE) are compositionally biased toward acidic residues.

Post-translationally, asymmetrically dimethylated at Arg-243 and Arg-428 during flagellum resorption. Probably methylated by PRMT1.

Its subcellular location is the cytoplasm. It localises to the cytoskeleton. It is found in the flagellum axoneme. Its function is as follows. Flagellar radial spokes contribute to the regulation of dynein arm activity and thus the pattern of flagellar bending. They consist of a thin stalk, which is attached to the a subfiber of the outer doublet microtubule, and a bulbous head, which is attached to the stalk and appears to interact with the projections from the central pair of microtubules. This Chlamydomonas reinhardtii (Chlamydomonas smithii) protein is Flagellar radial spoke protein 1.